The following is a 543-amino-acid chain: CTP synthase (543 aa).

Residues 1–265 (MARFIFITGG…DSEVLRAFGI (265 aa)) are amidoligase domain. Ser-13 serves as a coordination point for CTP. Ser-13 provides a ligand contact to UTP. ATP is bound at residue 14–19 (SLGKGL). Tyr-54 is an L-glutamine binding site. Residue Asp-71 participates in ATP binding. Mg(2+)-binding residues include Asp-71 and Glu-139. CTP-binding positions include 146 to 148 (DIE), 186 to 191 (KTKPTQ), and Lys-222. Residues 186–191 (KTKPTQ) and Lys-222 each bind UTP. The region spanning 291-542 (TIGVVGKYVS…IEAAVKQSRL (252 aa)) is the Glutamine amidotransferase type-1 domain. Residue Gly-354 participates in L-glutamine binding. Cys-381 acts as the Nucleophile; for glutamine hydrolysis in catalysis. Residues 382–385 (LGMQ), Glu-405, and Arg-470 contribute to the L-glutamine site. Catalysis depends on residues His-515 and Glu-517.

It belongs to the CTP synthase family. Homotetramer.

The catalysed reaction is UTP + L-glutamine + ATP + H2O = CTP + L-glutamate + ADP + phosphate + 2 H(+). It catalyses the reaction L-glutamine + H2O = L-glutamate + NH4(+). The enzyme catalyses UTP + NH4(+) + ATP = CTP + ADP + phosphate + 2 H(+). The protein operates within pyrimidine metabolism; CTP biosynthesis via de novo pathway; CTP from UDP: step 2/2. Allosterically activated by GTP, when glutamine is the substrate; GTP has no effect on the reaction when ammonia is the substrate. The allosteric effector GTP functions by stabilizing the protein conformation that binds the tetrahedral intermediate(s) formed during glutamine hydrolysis. Inhibited by the product CTP, via allosteric rather than competitive inhibition. Its function is as follows. Catalyzes the ATP-dependent amination of UTP to CTP with either L-glutamine or ammonia as the source of nitrogen. Regulates intracellular CTP levels through interactions with the four ribonucleotide triphosphates. This chain is CTP synthase, found in Sphingopyxis alaskensis (strain DSM 13593 / LMG 18877 / RB2256) (Sphingomonas alaskensis).